Here is a 251-residue protein sequence, read N- to C-terminus: Ditrans,polycis-undecaprenyl-diphosphate synthase ((2E,6E)-farnesyl-diphosphate specific) (251 aa).

Aspartate 26 is an active-site residue. Aspartate 26 contacts Mg(2+). Residues 27–30, tryptophan 31, arginine 39, histidine 43, and 71–73 each bind substrate; these read GNGR and SSE. The Proton acceptor role is filled by asparagine 74. Substrate is bound by residues tryptophan 75, arginine 77, arginine 194, and 200 to 202; that span reads RIS. Position 213 (glutamate 213) interacts with Mg(2+).

This sequence belongs to the UPP synthase family. In terms of assembly, homodimer. The cofactor is Mg(2+).

The catalysed reaction is 8 isopentenyl diphosphate + (2E,6E)-farnesyl diphosphate = di-trans,octa-cis-undecaprenyl diphosphate + 8 diphosphate. In terms of biological role, catalyzes the sequential condensation of isopentenyl diphosphate (IPP) with (2E,6E)-farnesyl diphosphate (E,E-FPP) to yield (2Z,6Z,10Z,14Z,18Z,22Z,26Z,30Z,34E,38E)-undecaprenyl diphosphate (di-trans,octa-cis-UPP). UPP is the precursor of glycosyl carrier lipid in the biosynthesis of bacterial cell wall polysaccharide components such as peptidoglycan and lipopolysaccharide. This is Ditrans,polycis-undecaprenyl-diphosphate synthase ((2E,6E)-farnesyl-diphosphate specific) from Buchnera aphidicola subsp. Acyrthosiphon pisum (strain APS) (Acyrthosiphon pisum symbiotic bacterium).